Consider the following 515-residue polypeptide: Fatty acyl-CoA reductase 2 (515 aa).

Residues 1-465 lie on the Cytoplasmic side of the membrane; the sequence is MSMIAAFYGG…AKQHLKRLRN (465 aa). The helical transmembrane segment at 466–484 threads the bilayer; the sequence is IHYLFNTALFLIAWRLLIA. The Peroxisomal segment spans residues 485-515; the sequence is RSQVARNVWFFIVSFCYKFLSYFRASSTLNV.

The protein belongs to the fatty acyl-CoA reductase family.

The protein resides in the peroxisome membrane. The catalysed reaction is a long-chain fatty acyl-CoA + 2 NADPH + 2 H(+) = a long-chain primary fatty alcohol + 2 NADP(+) + CoA. It catalyses the reaction hexadecanoyl-CoA + 2 NADPH + 2 H(+) = hexadecan-1-ol + 2 NADP(+) + CoA. It carries out the reaction octadecanoyl-CoA + 2 NADPH + 2 H(+) = octadecan-1-ol + 2 NADP(+) + CoA. The enzyme catalyses a very long-chain fatty acyl-CoA + 2 NADPH + 2 H(+) = a very long-chain primary fatty alcohol + 2 NADP(+) + CoA. The catalysed reaction is an ultra-long-chain fatty acyl-CoA + 2 NADPH + 2 H(+) = an ultra long-chain primary fatty alcohol + 2 NADP(+) + CoA. It catalyses the reaction eicosanoyl-CoA + 2 NADPH + 2 H(+) = eicosan-1-ol + 2 NADP(+) + CoA. It carries out the reaction docosanoyl-CoA + 2 NADPH + 2 H(+) = docosan-1-ol + 2 NADP(+) + CoA. The enzyme catalyses tetracosanoyl-CoA + 2 NADPH + 2 H(+) = tetracosan-1-ol + 2 NADP(+) + CoA. The catalysed reaction is hexacosanoyl-CoA + 2 NADPH + 2 H(+) = hexacosan-1-ol + 2 NADP(+) + CoA. It catalyses the reaction octacosanoyl-CoA + 2 NADPH + 2 H(+) = octacosan-1-ol + 2 NADP(+) + CoA. It carries out the reaction triacontanoyl-CoA + 2 NADPH + 2 H(+) = triacontan-1-ol + 2 NADP(+) + CoA. The enzyme catalyses 18-methylnonadecanoyl-CoA + 2 NADPH + 2 H(+) = 18-methylnonadecan-1-ol + 2 NADP(+) + CoA. The catalysed reaction is 20-methylheneicosanoyl-CoA + 2 NADPH + 2 H(+) = 20-methylheneicosan-1-ol + 2 NADP(+) + CoA. It catalyses the reaction 22-methyltricosanoyl-CoA + 2 NADPH + 2 H(+) = 22-methyltricosan-1-ol + 2 NADP(+) + CoA. It carries out the reaction 24-methylpentacosanoyl-CoA + 2 NADPH + 2 H(+) = 24-methylpentacosan-1-ol + 2 NADP(+) + CoA. In terms of biological role, catalyzes the reduction of saturated but not unsaturated C16 or C18 fatty acyl-CoA to fatty alcohols (FAls). A lower activity can be observed with shorter fatty acyl-CoA substrates. Can produce very long-chain and ultra long-chain FAls, regardless of whether they have a straight or branched chain. Involved in the production of ether lipids/plasmalogens and wax monoesters whose synthesis requires FAls as substrates. This Bos taurus (Bovine) protein is Fatty acyl-CoA reductase 2.